The primary structure comprises 150 residues: uncharacterized protein (150 aa).

It belongs to the Dps family.

This is an uncharacterized protein from Kitasatospora aureofaciens (Streptomyces aureofaciens).